Reading from the N-terminus, the 207-residue chain is Large ribosomal subunit protein uL4 (207 aa).

A disordered region spans residues 58-85 (AGSGKKPFKQKGTGQARQGCRRAPQYPG).

It belongs to the universal ribosomal protein uL4 family. In terms of assembly, part of the 50S ribosomal subunit.

Its function is as follows. One of the primary rRNA binding proteins, this protein initially binds near the 5'-end of the 23S rRNA. It is important during the early stages of 50S assembly. It makes multiple contacts with different domains of the 23S rRNA in the assembled 50S subunit and ribosome. Functionally, forms part of the polypeptide exit tunnel. The chain is Large ribosomal subunit protein uL4 from Geotalea uraniireducens (strain Rf4) (Geobacter uraniireducens).